A 279-amino-acid polypeptide reads, in one-letter code: Replication protein A 32 kDa subunit A (279 aa).

A disordered region spans residues M1 to T33. Residues M19 to S32 show a composition bias toward low complexity. A DNA-binding region (OB) is located at residues V73–I148.

It belongs to the replication factor A protein 2 family. As to quaternary structure, heterotrimer of RPA1, RPA2 and RPA3 (canonical replication protein A complex). Interacts with ROS1. Binds to ASE1/At3g02920, PDX2, At5g62350, RPA1A/At2g06510, ARF1/At1g10630, At4g18590 and At3g52630. Post-translationally, phosphorylated in a cell-cycle-dependent manner (from the S phase until mitosis). In response to DNA damage, recruited to DNA-repair nuclear foci, as a hypophosphorylated form. As to expression, strongly expressed in shoot and root meristems. Present in seedlings, roots, leaves, siliques and flowers.

It localises to the nucleus. In terms of biological role, component of the replication protein A complex (RPA) required for DNA recombination, repair and replication. The activity of RPA is mediated by single-stranded DNA binding and protein interactions. Required fo cell division in meristems. Involved in the maintenance of transcriptional epigenetic gene silencing (TGS) at specific loci (including some transposons) by regulating histone H3 acetylation, 'Lys-4' and 'Lys-9' methylation. This is Replication protein A 32 kDa subunit A (RPA2A) from Arabidopsis thaliana (Mouse-ear cress).